The chain runs to 1165 residues: Autophagy-related protein 11 (1165 aa).

Coiled coils occupy residues 239–304 (NKLN…YKNM) and 670–853 (DNIR…KQKK).

It belongs to the ATG11 family. In terms of assembly, homodimer and potential homooligomers.

Its subcellular location is the preautophagosomal structure membrane. Functionally, plays an essential role in both non-selective and selective autophagy such as mitophagy. Recruits mitochondria for their selective degradation via autophagy (mitophagy) during starvation, through its interaction with ATG32. Works as scaffold proteins that recruit ATG proteins to the pre-autophagosome (PAS), the site of vesicle/autophagosome formation. Required for ATG9 anterograde transport from the mitochondria to the PAS. In Candida albicans (strain SC5314 / ATCC MYA-2876) (Yeast), this protein is Autophagy-related protein 11.